The following is a 386-amino-acid chain: NADH kinase pos5, mitochondrial (386 aa).

The N-terminal 42 residues, 1 to 42, are a transit peptide targeting the mitochondrion; it reads MIRAANGFRISVRNTAVCLAPNFRQLKGFSIINLGSLQYFRY.

It belongs to the NAD kinase family.

Its subcellular location is the mitochondrion. It catalyses the reaction NADH + ATP = ADP + NADPH + H(+). Phosphorylates both NADH and NAD(+), with a preference for NADH. Anti-oxidant factor and key source of the cellular reductant NADPH. This is NADH kinase pos5, mitochondrial (pos5) from Schizosaccharomyces pombe (strain 972 / ATCC 24843) (Fission yeast).